A 4471-amino-acid polypeptide reads, in one-letter code: Dynein axonemal heavy chain 10 (4471 aa).

The tract at residues M1–G1793 is stem. The disordered stretch occupies residues T46–S65. Coiled-coil stretches lie at residues N203 to K223, Q602 to K622, K1071 to K1106, and V1217 to D1245. N-linked (GlcNAc...) asparagine glycosylation occurs at N1074. One copy of the TPR 1 repeat lies at G1221–L1254. AAA regions lie at residues Y1794–M2015, D2075–E2294, I2417–G2665, and E2765–S3014. The short motif at G1832–T1839 is the GPAGTGKT motif element. Residue G1832–T1839 participates in ATP binding. A CFDEFNR motif motif is present at residues C1882–R1888. Residues G2113–S2120 and G2455–T2462 contribute to the ATP site. TPR repeat units lie at residues M2736 to S2769 and T2771 to G2797. A coiled-coil region spans residues E2747 to N2770. G2803 to Q2810 contributes to the ATP binding site. The stalk stretch occupies residues Y3029–M3313. 3 coiled-coil regions span residues K3045–V3131, K3257–L3327, and E3567–A3638. The segment at L3399–E3629 is AAA 5. One copy of the TPR 4 repeat lies at W3802–R3837. The segment at V3845 to T4062 is AAA 6. Residues R4074–E4108 form a TPR 5 repeat. Residues L4235–L4260 are a coiled coil.

The protein belongs to the dynein heavy chain family. Consists of at least two heavy chains and a number of intermediate and light chains. In terms of tissue distribution, expressed primarily in trachea and testis, 2 tissues containing axonemal structures. Also expressed in brain but not in adult heart.

It is found in the cytoplasm. Its subcellular location is the cytoskeleton. The protein resides in the cilium axoneme. In terms of biological role, force generating protein of respiratory cilia. Produces force towards the minus ends of microtubules. Dynein has ATPase activity; the force-producing power stroke is thought to occur on release of ADP. Involved in sperm motility; implicated in sperm flagellar assembly. Probable inner arm dynein heavy chain. The polypeptide is Dynein axonemal heavy chain 10 (DNAH10) (Homo sapiens (Human)).